The sequence spans 160 residues: uncharacterized protein (160 aa).

Residues 9-151 form the N-acetyltransferase domain; that stretch reads LLINYKTLEK…GENPLIWLPE (143 aa).

This is an uncharacterized protein from Oceanobacillus iheyensis (strain DSM 14371 / CIP 107618 / JCM 11309 / KCTC 3954 / HTE831).